Consider the following 87-residue polypeptide: CRISPR-associated endoribonuclease Cas2 (87 aa).

Asp-8 contributes to the Mg(2+) binding site.

Belongs to the CRISPR-associated endoribonuclease Cas2 protein family. As to quaternary structure, homodimer, forms a heterotetramer with a Cas1 homodimer. Mg(2+) serves as cofactor.

Functionally, CRISPR (clustered regularly interspaced short palindromic repeat), is an adaptive immune system that provides protection against mobile genetic elements (viruses, transposable elements and conjugative plasmids). CRISPR clusters contain sequences complementary to antecedent mobile elements and target invading nucleic acids. CRISPR clusters are transcribed and processed into CRISPR RNA (crRNA). Functions as a ssRNA-specific endoribonuclease. Involved in the integration of spacer DNA into the CRISPR cassette. This chain is CRISPR-associated endoribonuclease Cas2, found in Dictyoglomus turgidum (strain DSM 6724 / Z-1310).